Here is a 599-residue protein sequence, read N- to C-terminus: Cartilage intermediate layer protein 1 (599 aa).

N-linked (GlcNAc...) asparagine glycans are attached at residues asparagine 47, asparagine 416, and asparagine 472. A compositionally biased stretch (polar residues) spans 550 to 560; the sequence is QSTSARPSPAS. Residues 550–599 form a disordered region; the sequence is QSTSARPSPASTVRGRAPSRRQRASSGSQRQPRGVASLRFPGVAQQPLSN. Low complexity predominate over residues 573 to 583; sequence ASSGSQRQPRG.

Monomer. Interacts with TGFB1. Post-translationally, cleaved into 2 chains possibly by a furin-like protease upon or preceding secretion. As to expression, specifically expressed in cartilage. Expressed at lower level in young cartilage than in adult cartilage. In adult cartilage, it is highly expressed throughout middeep zones.

It is found in the secreted. The protein resides in the extracellular space. It localises to the extracellular matrix. Functionally, probably plays a role in cartilage scaffolding. May act by antagonizing TGF-beta1 (TGFB1) and IGF1 functions. Has the ability to suppress IGF1-induced proliferation and sulfated proteoglycan synthesis, and inhibits ligand-induced IGF1R autophosphorylation. May inhibit TGFB1-mediated induction of cartilage matrix genes via its interaction with TGFB1. Overexpression may lead to impair chondrocyte growth and matrix repair and indirectly promote inorganic pyrophosphate (PPi) supersaturation in aging and osteoarthritis cartilage. The sequence is that of Cartilage intermediate layer protein 1 (CILP) from Sus scrofa (Pig).